The chain runs to 46 residues: Large ribosomal subunit protein bL36B (46 aa).

The protein belongs to the bacterial ribosomal protein bL36 family.

This chain is Large ribosomal subunit protein bL36B, found in Cronobacter sakazakii (strain ATCC BAA-894) (Enterobacter sakazakii).